The primary structure comprises 268 residues: Tryptophan synthase alpha chain (268 aa).

Catalysis depends on proton acceptor residues E49 and D60.

The protein belongs to the TrpA family. Tetramer of two alpha and two beta chains.

The catalysed reaction is (1S,2R)-1-C-(indol-3-yl)glycerol 3-phosphate + L-serine = D-glyceraldehyde 3-phosphate + L-tryptophan + H2O. Its pathway is amino-acid biosynthesis; L-tryptophan biosynthesis; L-tryptophan from chorismate: step 5/5. Functionally, the alpha subunit is responsible for the aldol cleavage of indoleglycerol phosphate to indole and glyceraldehyde 3-phosphate. The polypeptide is Tryptophan synthase alpha chain (Escherichia coli O127:H6 (strain E2348/69 / EPEC)).